The primary structure comprises 91 residues: Elongation factor 1-beta (91 aa).

This sequence belongs to the EF-1-beta/EF-1-delta family.

Its function is as follows. Promotes the exchange of GDP for GTP in EF-1-alpha/GDP, thus allowing the regeneration of EF-1-alpha/GTP that could then be used to form the ternary complex EF-1-alpha/GTP/AAtRNA. The chain is Elongation factor 1-beta from Thermococcus onnurineus (strain NA1).